A 146-amino-acid chain; its full sequence is Interleukin-3 (146 aa).

The N-terminal stretch at 1-17 is a signal peptide; the sequence is MSSLSILHLLLLLLSLH. An N-linked (GlcNAc...) asparagine glycan is attached at asparagine 65.

The protein belongs to the IL-3 family. As to quaternary structure, monomer. Activated T-cells, mast cells, natural killer cells.

It localises to the secreted. Functionally, granulocyte/macrophage colony-stimulating factors are cytokines that act in hematopoiesis by controlling the production, differentiation, and function of 2 related white cell populations of the blood, the granulocytes and the monocytes-macrophages. This CSF induces granulocytes, macrophages, mast cells, stem cells, erythroid cells, eosinophils and megakaryocytes. The protein is Interleukin-3 (IL3) of Ovis aries (Sheep).